Consider the following 215-residue polypeptide: Imidazole glycerol phosphate synthase subunit HisH (215 aa).

In terms of domain architecture, Glutamine amidotransferase type-1 spans 8 to 215; it reads KVVVFDYGFG…QLLNNWIGTL (208 aa). The Nucleophile role is filled by Cys-86. Catalysis depends on residues His-196 and Glu-198.

In terms of assembly, heterodimer of HisH and HisF.

It localises to the cytoplasm. It catalyses the reaction 5-[(5-phospho-1-deoxy-D-ribulos-1-ylimino)methylamino]-1-(5-phospho-beta-D-ribosyl)imidazole-4-carboxamide + L-glutamine = D-erythro-1-(imidazol-4-yl)glycerol 3-phosphate + 5-amino-1-(5-phospho-beta-D-ribosyl)imidazole-4-carboxamide + L-glutamate + H(+). The catalysed reaction is L-glutamine + H2O = L-glutamate + NH4(+). The protein operates within amino-acid biosynthesis; L-histidine biosynthesis; L-histidine from 5-phospho-alpha-D-ribose 1-diphosphate: step 5/9. Its function is as follows. IGPS catalyzes the conversion of PRFAR and glutamine to IGP, AICAR and glutamate. The HisH subunit catalyzes the hydrolysis of glutamine to glutamate and ammonia as part of the synthesis of IGP and AICAR. The resulting ammonia molecule is channeled to the active site of HisF. In Streptomyces avermitilis (strain ATCC 31267 / DSM 46492 / JCM 5070 / NBRC 14893 / NCIMB 12804 / NRRL 8165 / MA-4680), this protein is Imidazole glycerol phosphate synthase subunit HisH.